The following is a 331-amino-acid chain: Holliday junction branch migration complex subunit RuvB (331 aa).

The large ATPase domain (RuvB-L) stretch occupies residues 1-182; that stretch reads MDDRMVDQAL…FGVHLRLEYY (182 aa). Residues leucine 21, arginine 22, glycine 63, lysine 66, threonine 67, threonine 68, 129-131, arginine 172, tyrosine 182, and arginine 219 contribute to the ATP site; that span reads EDF. Threonine 67 lines the Mg(2+) pocket. A small ATPAse domain (RuvB-S) region spans residues 183–253; that stretch reads NENDLKEIII…TTKQALQLLQ (71 aa). The segment at 256 to 331 is head domain (RuvB-H); sequence AEGLDYIDHK…AYEHFKNFNK (76 aa). DNA contacts are provided by arginine 292, arginine 311, and arginine 316.

Belongs to the RuvB family. Homohexamer. Forms an RuvA(8)-RuvB(12)-Holliday junction (HJ) complex. HJ DNA is sandwiched between 2 RuvA tetramers; dsDNA enters through RuvA and exits via RuvB. An RuvB hexamer assembles on each DNA strand where it exits the tetramer. Each RuvB hexamer is contacted by two RuvA subunits (via domain III) on 2 adjacent RuvB subunits; this complex drives branch migration. In the full resolvosome a probable DNA-RuvA(4)-RuvB(12)-RuvC(2) complex forms which resolves the HJ.

It is found in the cytoplasm. The catalysed reaction is ATP + H2O = ADP + phosphate + H(+). Functionally, the RuvA-RuvB-RuvC complex processes Holliday junction (HJ) DNA during genetic recombination and DNA repair, while the RuvA-RuvB complex plays an important role in the rescue of blocked DNA replication forks via replication fork reversal (RFR). RuvA specifically binds to HJ cruciform DNA, conferring on it an open structure. The RuvB hexamer acts as an ATP-dependent pump, pulling dsDNA into and through the RuvAB complex. RuvB forms 2 homohexamers on either side of HJ DNA bound by 1 or 2 RuvA tetramers; 4 subunits per hexamer contact DNA at a time. Coordinated motions by a converter formed by DNA-disengaged RuvB subunits stimulates ATP hydrolysis and nucleotide exchange. Immobilization of the converter enables RuvB to convert the ATP-contained energy into a lever motion, pulling 2 nucleotides of DNA out of the RuvA tetramer per ATP hydrolyzed, thus driving DNA branch migration. The RuvB motors rotate together with the DNA substrate, which together with the progressing nucleotide cycle form the mechanistic basis for DNA recombination by continuous HJ branch migration. Branch migration allows RuvC to scan DNA until it finds its consensus sequence, where it cleaves and resolves cruciform DNA. The chain is Holliday junction branch migration complex subunit RuvB from Staphylococcus haemolyticus (strain JCSC1435).